We begin with the raw amino-acid sequence, 310 residues long: tRNA-cytidine(32) 2-sulfurtransferase (310 aa).

The short motif at 45–50 is the PP-loop motif element; sequence SGGKDS. The [4Fe-4S] cluster site is built by C120, C123, and C211.

The protein belongs to the TtcA family. In terms of assembly, homodimer. Requires Mg(2+) as cofactor. It depends on [4Fe-4S] cluster as a cofactor.

The protein resides in the cytoplasm. The enzyme catalyses cytidine(32) in tRNA + S-sulfanyl-L-cysteinyl-[cysteine desulfurase] + AH2 + ATP = 2-thiocytidine(32) in tRNA + L-cysteinyl-[cysteine desulfurase] + A + AMP + diphosphate + H(+). Its pathway is tRNA modification. Catalyzes the ATP-dependent 2-thiolation of cytidine in position 32 of tRNA, to form 2-thiocytidine (s(2)C32). The sulfur atoms are provided by the cysteine/cysteine desulfurase (IscS) system. This Shewanella baltica (strain OS185) protein is tRNA-cytidine(32) 2-sulfurtransferase.